Reading from the N-terminus, the 187-residue chain is UPF0301 protein PBPRA3139 (187 aa).

Belongs to the UPF0301 (AlgH) family.

The chain is UPF0301 protein PBPRA3139 from Photobacterium profundum (strain SS9).